The sequence spans 407 residues: Accessory Sec system protein translocase subunit SecY2 (407 aa).

10 helical membrane-spanning segments follow: residues 13-33 (FLWTLLFVFIYVLGSKLTLPF), 65-85 (FFSIGLAPWMSSILIWQMFTV), 104-124 (MLLTLAIALIQSLGLVLNLPL), 133-153 (GTIVFLDTLILIAGTYFLIWL), 158-178 (SSMGLGGSIMIVMVSMISYIP), 192-212 (PLILALIGFFSLCFLYLAVLV), 248-268 (IMYAMTLVSIPQYFLMLLLFF), 287-307 (IPWFILYLLTIFILAWAFAFI), 345-365 (FAFVGALYLVLVAGLPMLLIF), and 370-390 (YMRLGMIPGMFMIFIGMVFSI).

This sequence belongs to the SecY/SEC61-alpha family. SecY2 subfamily. In terms of assembly, may form heterotrimers with SecE and SecG subunits (Potential). Component of the accessory SecA2/SecY2 protein translocase complex required to export cell wall protein GspB.

It localises to the cell membrane. The central subunit of a protein translocation channel (Potential). Part of the accessory SecA2/SecY2 system specifically required to export GspB, a serine-rich repeat cell wall protein encoded upstream in the same operon. The protein is Accessory Sec system protein translocase subunit SecY2 of Streptococcus gordonii.